We begin with the raw amino-acid sequence, 363 residues long: Pyrimidine monooxygenase RutA (363 aa).

FMN is bound by residues 49–50 (IK), Asn-115, Glu-124, 140–141 (RY), and Ser-190.

Belongs to the NtaA/SnaA/DszA monooxygenase family. RutA subfamily.

The catalysed reaction is uracil + FMNH2 + NADH + O2 = (Z)-3-ureidoacrylate + FMN + NAD(+) + H2O + H(+). The enzyme catalyses thymine + FMNH2 + NADH + O2 = (Z)-2-methylureidoacrylate + FMN + NAD(+) + H2O + H(+). In terms of biological role, catalyzes the pyrimidine ring opening between N-3 and C-4 by an unusual flavin hydroperoxide-catalyzed mechanism, adding oxygen atoms in the process to yield ureidoacrylate peracid, that immediately reacts with FMN forming ureidoacrylate and FMN-N(5)-oxide. The FMN-N(5)-oxide reacts spontaneously with NADH to produce FMN. Requires the flavin reductase RutF to regenerate FMN in vivo. This chain is Pyrimidine monooxygenase RutA, found in Escherichia coli (strain SMS-3-5 / SECEC).